Reading from the N-terminus, the 514-residue chain is Na(+)/H(+) antiporter NhaB (514 aa).

A run of 11 helical transmembrane segments spans residues 21–41 (LAIV…SPFI), 43–63 (GWLL…CYPL), 88–108 (IMAN…IFFM), 143–163 (FLDA…FYGV), 203–223 (LMMH…VGEP), 239–259 (FFLR…LTCF), 304–324 (ALIA…VGLI), 349–369 (QESL…AVII), 390–410 (LALF…VFVA), 448–468 (ATPN…SPLI), and 484–504 (IVLS…ATIW).

It belongs to the NhaB Na(+)/H(+) (TC 2.A.34) antiporter family.

It is found in the cell inner membrane. It carries out the reaction 2 Na(+)(in) + 3 H(+)(out) = 2 Na(+)(out) + 3 H(+)(in). Its function is as follows. Na(+)/H(+) antiporter that extrudes sodium in exchange for external protons. In Haemophilus influenzae (strain ATCC 51907 / DSM 11121 / KW20 / Rd), this protein is Na(+)/H(+) antiporter NhaB.